Here is a 259-residue protein sequence, read N- to C-terminus: 14-3-3-like protein (259 aa).

A disordered region spans residues 238 to 259 (MQDPAAGDDREGADMKVEDAEP). A compositionally biased stretch (basic and acidic residues) spans 244–259 (GDDREGADMKVEDAEP).

The protein belongs to the 14-3-3 family.

This Chlamydomonas reinhardtii (Chlamydomonas smithii) protein is 14-3-3-like protein.